Reading from the N-terminus, the 447-residue chain is Na(+)-translocating NADH-quinone reductase subunit A (447 aa).

This sequence belongs to the NqrA family. In terms of assembly, composed of six subunits; NqrA, NqrB, NqrC, NqrD, NqrE and NqrF.

It carries out the reaction a ubiquinone + n Na(+)(in) + NADH + H(+) = a ubiquinol + n Na(+)(out) + NAD(+). NQR complex catalyzes the reduction of ubiquinone-1 to ubiquinol by two successive reactions, coupled with the transport of Na(+) ions from the cytoplasm to the periplasm. NqrA to NqrE are probably involved in the second step, the conversion of ubisemiquinone to ubiquinol. The chain is Na(+)-translocating NADH-quinone reductase subunit A from Yersinia pseudotuberculosis serotype O:1b (strain IP 31758).